Here is a 64-residue protein sequence, read N- to C-terminus: MVFLKKSLLLVLFVGLVSLSICEENKREEHEEVEENAEKAEEKRGWMSKIASGIGTFLSGVQQG.

An N-terminal signal peptide occupies residues 1-22 (MVFLKKSLLLVLFVGLVSLSIC). Positions 23–44 (EENKREEHEEVEENAEKAEEKR) are excised as a propeptide. The residue at position 63 (Q63) is a Glutamine amide.

As to expression, expressed by the skin glands.

Its subcellular location is the secreted. Antimicrobial peptide against both Gram-positive and Gram-negative bacteria. The protein is Phylloxin-S1 of Phyllomedusa sauvagei (Sauvage's leaf frog).